A 221-amino-acid chain; its full sequence is Epididymal secretory glutathione peroxidase (221 aa).

An N-terminal signal peptide occupies residues 1-21; that stretch reads MTAWLGASYVLPILLVSFVQT. Cys-73 is an active-site residue.

It belongs to the glutathione peroxidase family. In terms of tissue distribution, epididymis.

It localises to the secreted. It carries out the reaction 2 glutathione + H2O2 = glutathione disulfide + 2 H2O. Protects cells and enzymes from oxidative damage, by catalyzing the reduction of hydrogen peroxide, lipid peroxides and organic hydroperoxide, by glutathione. May constitute a glutathione peroxidase-like protective system against peroxide damage in sperm membrane lipids. The sequence is that of Epididymal secretory glutathione peroxidase (GPX5) from Canis lupus familiaris (Dog).